The chain runs to 531 residues: Coiled-coil domain-containing protein 9 (531 aa).

A disordered region spans residues 40–531 (EDRKKAELEG…PGEAWPFESV (492 aa)). Residues 59–72 (RSVEKENVAVESEK) show a composition bias toward basic and acidic residues. Ser-80 is modified (phosphoserine). Thr-95 is modified (phosphothreonine). Omega-N-methylarginine is present on Arg-107. Phosphoserine is present on Ser-111. Omega-N-methylarginine occurs at positions 121, 128, and 130. 3 positions are modified to asymmetric dimethylarginine: Arg-131, Arg-133, and Arg-135. Position 137 is a phosphoserine (Ser-137). 3 stretches are compositionally biased toward basic and acidic residues: residues 148 to 185 (ISDR…REGV), 194 to 217 (FLDD…EESR), and 227 to 241 (DFER…ERQG). The stretch at 149–185 (SDRKSKEWEERRRQNIEKMNEEMEKIAEYERNQREGV) forms a coiled coil. Ser-202 is modified (phosphoserine). Phosphoserine is present on residues Ser-248 and Ser-255. 4 stretches are compositionally biased toward basic and acidic residues: residues 258-279 (GRER…QERL), 289-302 (WRRE…DGMF), 311-320 (EPSHRYDDQA), and 361-372 (YSDHDDRWETKE). Residues Ser-376, Ser-386, and Ser-390 each carry the phosphoserine modification. The segment covering 386 to 395 (SPETSPKETP) has biased composition (low complexity). Positions 396–406 (MQPPEIPAPAH) are enriched in pro residues. Residues 411–446 (DEGEENEGEEDEEWEDISEDEEEEEIEVEEGDEEEP) are compositionally biased toward acidic residues. At Ser-521 the chain carries Phosphoserine.

In terms of assembly, probable component of the exon junction complex (EJC); the association is RNA-dependent.

Probable component of the exon junction complex (EJC), a multiprotein complex that associates immediately upstream of the exon-exon junction on mRNAs and serves as a positional landmark for the intron exon structure of genes and directs post-transcriptional processes in the cytoplasm such as mRNA export, nonsense-mediated mRNA decay (NMD) or translation. The chain is Coiled-coil domain-containing protein 9 from Homo sapiens (Human).